The primary structure comprises 31 residues: Cytochrome b6-f complex subunit 6 (31 aa).

The helical transmembrane segment at 4–24 threads the bilayer; the sequence is ITSYFGFLLVALTITSALFIG.

The protein belongs to the PetL family. As to quaternary structure, the 4 large subunits of the cytochrome b6-f complex are cytochrome b6, subunit IV (17 kDa polypeptide, PetD), cytochrome f and the Rieske protein, while the 4 small subunits are PetG, PetL, PetM and PetN. The complex functions as a dimer.

Its subcellular location is the plastid. The protein resides in the chloroplast thylakoid membrane. Functionally, component of the cytochrome b6-f complex, which mediates electron transfer between photosystem II (PSII) and photosystem I (PSI), cyclic electron flow around PSI, and state transitions. PetL is important for photoautotrophic growth as well as for electron transfer efficiency and stability of the cytochrome b6-f complex. The polypeptide is Cytochrome b6-f complex subunit 6 (Panax ginseng (Korean ginseng)).